Here is a 329-residue protein sequence, read N- to C-terminus: Protein Brevis radix-like 4 (329 aa).

Residues Ser-12–Tyr-37 form a disordered region. The BRX 1 domain occupies Arg-86–Asn-142. Positions Leu-151–Val-263 are disordered. Composition is skewed to low complexity over residues Ser-222–Gln-236 and Ala-243–Ala-252. Polar residues predominate over residues Arg-253–Val-263. The BRX 2 domain occupies Thr-274–Leu-329.

It belongs to the BRX family.

It localises to the nucleus. The polypeptide is Protein Brevis radix-like 4 (BRXL4) (Oryza sativa subsp. japonica (Rice)).